The following is a 382-amino-acid chain: Lipid-A-disaccharide synthase (382 aa).

It belongs to the LpxB family.

The enzyme catalyses 2-N,3-O-bis[(3R)-3-hydroxytetradecanoyl]-alpha-D-glucosaminyl 1-phosphate + UDP-2-N,3-O-bis[(3R)-3-hydroxytetradecanoyl]-alpha-D-glucosamine = lipid A disaccharide (E. coli) + UDP + H(+). It catalyses the reaction a lipid X + a UDP-2-N,3-O-bis[(3R)-3-hydroxyacyl]-alpha-D-glucosamine = a lipid A disaccharide + UDP + H(+). It functions in the pathway glycolipid biosynthesis; lipid IV(A) biosynthesis; lipid IV(A) from (3R)-3-hydroxytetradecanoyl-[acyl-carrier-protein] and UDP-N-acetyl-alpha-D-glucosamine: step 5/6. Its function is as follows. Condensation of UDP-2,3-diacylglucosamine and 2,3-diacylglucosamine-1-phosphate to form lipid A disaccharide, a precursor of lipid A, a phosphorylated glycolipid that anchors the lipopolysaccharide to the outer membrane of the cell. The sequence is that of Lipid-A-disaccharide synthase from Salmonella heidelberg (strain SL476).